The primary structure comprises 691 residues: Elongation factor G (691 aa).

The tr-type G domain maps to 8–283 (EDYRNFGIMA…AVVDYLPSPA (276 aa)). Residues 17-24 (AHIDAGKT), 81-85 (DTPGH), and 135-138 (NKMD) each bind GTP.

It belongs to the TRAFAC class translation factor GTPase superfamily. Classic translation factor GTPase family. EF-G/EF-2 subfamily.

The protein localises to the cytoplasm. Catalyzes the GTP-dependent ribosomal translocation step during translation elongation. During this step, the ribosome changes from the pre-translocational (PRE) to the post-translocational (POST) state as the newly formed A-site-bound peptidyl-tRNA and P-site-bound deacylated tRNA move to the P and E sites, respectively. Catalyzes the coordinated movement of the two tRNA molecules, the mRNA and conformational changes in the ribosome. This is Elongation factor G from Methylobacterium sp. (strain 4-46).